We begin with the raw amino-acid sequence, 479 residues long: Protein kinase 2 (479 aa).

Positions 1–136 are disordered; that stretch reads MGKGQSKIKN…NGNDDEDEGP (136 aa). Low complexity-rich tracts occupy residues 52–65 and 79–96; these read AQQQ…TTAA and IPAP…TPTI. Positions 102–115 are enriched in polar residues; that stretch reads NTDNNNINGASNEA. The Protein kinase domain maps to 153–407; sequence FELLNVIGKG…GGEVKQHPWF (255 aa). ATP is bound by residues 159-167 and lysine 182; that span reads IGKGSFGKV. Aspartate 276 functions as the Proton acceptor in the catalytic mechanism. Residue threonine 309 is modified to Phosphothreonine; by autocatalysis. The AGC-kinase C-terminal domain maps to 408–479; that stretch reads KNIDWEKLDR…TYVADSILKD (72 aa). At threonine 470 the chain carries Phosphothreonine.

This sequence belongs to the protein kinase superfamily. AGC Ser/Thr protein kinase family. S6 kinase subfamily. In terms of processing, seems to be myristoylated.

It is found in the cytoplasm. It localises to the cell membrane. The enzyme catalyses L-seryl-[protein] + ATP = O-phospho-L-seryl-[protein] + ADP + H(+). It catalyses the reaction L-threonyl-[protein] + ATP = O-phospho-L-threonyl-[protein] + ADP + H(+). In terms of biological role, required for morphogenesis during multicellular development. Phosphorylates talB, gefN, gefS, PI4P 5-kinase and gacQ. The chain is Protein kinase 2 (pkgB) from Dictyostelium discoideum (Social amoeba).